We begin with the raw amino-acid sequence, 316 residues long: MKPTVVSADVLFEDHRATLKWEWVAGLGASERRFDEVAVSEARSGADLVGYLNYIHPYRVQILGEREVAYLSHVGPEDSARRISRIITLEPPVLVVADGQTAPDTLLSMCERAQLPMFATPESAAFVIDVLRAYLSRHFAERTSMHGVFMDILGMGVMITGESGLGKSELGLELISRGHGLVADDAIDLFRINQTAIEGRCPDLLQNLLEVRGIGLLDIKAIFGETAVRRKMRLKMIVHLVRRETLERDYERIPYEPLTQDVLGVPVRKVIIQVEAGRNIAVLVEAAVRNAILQLRGINTYQEFVERHRRAMEQDD.

Active-site residues include histidine 146 and lysine 167. Position 161–168 (161–168 (GESGLGKS)) interacts with ATP. Serine 168 contributes to the Mg(2+) binding site. The active-site Proton acceptor; for phosphorylation activity. Proton donor; for dephosphorylation activity is the aspartate 185. The interval 209-218 (LEVRGIGLLD) is important for the catalytic mechanism of both phosphorylation and dephosphorylation. Glutamate 210 provides a ligand contact to Mg(2+). Arginine 252 is a catalytic residue. Residues 273-278 (QVEAGR) form an important for the catalytic mechanism of dephosphorylation region.

This sequence belongs to the HPrK/P family. Homohexamer. Mg(2+) is required as a cofactor.

It carries out the reaction [HPr protein]-L-serine + ATP = [HPr protein]-O-phospho-L-serine + ADP + H(+). The enzyme catalyses [HPr protein]-O-phospho-L-serine + phosphate + H(+) = [HPr protein]-L-serine + diphosphate. In terms of biological role, catalyzes the ATP- as well as the pyrophosphate-dependent phosphorylation of a specific serine residue in HPr, a phosphocarrier protein of the phosphoenolpyruvate-dependent sugar phosphotransferase system (PTS). HprK/P also catalyzes the pyrophosphate-producing, inorganic phosphate-dependent dephosphorylation (phosphorolysis) of seryl-phosphorylated HPr (P-Ser-HPr). In Polaromonas naphthalenivorans (strain CJ2), this protein is HPr kinase/phosphorylase.